Here is a 219-residue protein sequence, read N- to C-terminus: Ras-related protein Rab-3B (219 aa).

Ala-2 bears the N-acetylalanine mark. GTP is bound by residues Ser-31, Ser-32, Val-33, Gly-34, Lys-35, Thr-36, Ser-37, Pro-49, and Ser-53. Position 36 (Thr-36) interacts with Mg(2+). Positions 45–58 (DTFTPAFVSTVGID) match the Switch 1 motif. Residues Thr-54 and Asp-77 each coordinate Mg(2+). Residues 78–96 (TAGQERYRTITTAYYRGAM) carry the Switch 2 motif. Gly-80 is a GTP binding site. Position 86 is a phosphothreonine (Thr-86). Residues Asn-135, Lys-136, Asp-138, Ala-166, and Lys-167 each contribute to the GTP site. The residue at position 188 (Ser-188) is a Phosphoserine. Residues Cys-217 and Cys-219 are each lipidated (S-geranylgeranyl cysteine). A Cysteine methyl ester modification is found at Cys-219.

It belongs to the small GTPase superfamily. Rab family. Interacts with RIMS1, RIMS2, RPH3A and RPH3AL. The GTP-bound form interacts with GAS8/DRC4 (via coiled-coil domains). Interacts with GDI2, CHM and CHML; phosphorylation at Thr-86 disrupts these interactions. Interacts with MADD (via uDENN domain); the GTP-bound form is preferred for interaction. Requires Mg(2+) as cofactor. Post-translationally, phosphorylation of Thr-86 in the switch II region by LRRK2 prevents the association of RAB regulatory proteins, including CHM, CHML and RAB GDP dissociation inhibitor GDI2.

It localises to the cell membrane. The protein localises to the golgi apparatus. It carries out the reaction GTP + H2O = GDP + phosphate + H(+). Its activity is regulated as follows. Regulated by guanine nucleotide exchange factors (GEFs) which promote the exchange of bound GDP for free GTP. Regulated by GTPase activating proteins (GAPs) which increase the GTP hydrolysis activity. Inhibited by GDP dissociation inhibitors (GDIs) which prevent Rab-GDP dissociation. Its function is as follows. The small GTPases Rab are key regulators of intracellular membrane trafficking, from the formation of transport vesicles to their fusion with membranes. Rabs cycle between an inactive GDP-bound form and an active GTP-bound form that is able to recruit to membranes different sets of downstream effectors directly responsible for vesicle formation, movement, tethering and fusion. This is Ras-related protein Rab-3B (RAB3B) from Bos taurus (Bovine).